The following is a 67-amino-acid chain: Large ribosomal subunit protein uL29 (67 aa).

Belongs to the universal ribosomal protein uL29 family.

The chain is Large ribosomal subunit protein uL29 from Clostridium acetobutylicum (strain ATCC 824 / DSM 792 / JCM 1419 / IAM 19013 / LMG 5710 / NBRC 13948 / NRRL B-527 / VKM B-1787 / 2291 / W).